We begin with the raw amino-acid sequence, 237 residues long: D-aminoacyl-tRNA deacylase (237 aa).

Belongs to the DtdA deacylase family. In terms of assembly, monomer. Requires Zn(2+) as cofactor.

The catalysed reaction is a D-aminoacyl-tRNA + H2O = a tRNA + a D-alpha-amino acid + H(+). It carries out the reaction glycyl-tRNA(Ala) + H2O = tRNA(Ala) + glycine + H(+). Functionally, D-aminoacyl-tRNA deacylase with broad substrate specificity. By recycling D-aminoacyl-tRNA to D-amino acids and free tRNA molecules, this enzyme counteracts the toxicity associated with the formation of D-aminoacyl-tRNA entities in vivo. In Saccharolobus islandicus (strain Y.N.15.51 / Yellowstone #2) (Sulfolobus islandicus), this protein is D-aminoacyl-tRNA deacylase.